A 188-amino-acid polypeptide reads, in one-letter code: dCTP deaminase (188 aa).

A dCTP-binding site is contributed by 109–114; that stretch reads KSTYAR. The Proton donor/acceptor role is filled by glutamate 135. Glutamine 154, tyrosine 168, and glutamine 178 together coordinate dCTP.

This sequence belongs to the dCTP deaminase family. Homotrimer.

The catalysed reaction is dCTP + H2O + H(+) = dUTP + NH4(+). The protein operates within pyrimidine metabolism; dUMP biosynthesis; dUMP from dCTP (dUTP route): step 1/2. Functionally, catalyzes the deamination of dCTP to dUTP. This is dCTP deaminase from Helicobacter hepaticus (strain ATCC 51449 / 3B1).